Reading from the N-terminus, the 348-residue chain is Phosphoribosylformylglycinamidine cyclo-ligase (348 aa).

It belongs to the AIR synthase family.

It localises to the cytoplasm. The enzyme catalyses 2-formamido-N(1)-(5-O-phospho-beta-D-ribosyl)acetamidine + ATP = 5-amino-1-(5-phospho-beta-D-ribosyl)imidazole + ADP + phosphate + H(+). Its pathway is purine metabolism; IMP biosynthesis via de novo pathway; 5-amino-1-(5-phospho-D-ribosyl)imidazole from N(2)-formyl-N(1)-(5-phospho-D-ribosyl)glycinamide: step 2/2. This is Phosphoribosylformylglycinamidine cyclo-ligase from Ruegeria pomeroyi (strain ATCC 700808 / DSM 15171 / DSS-3) (Silicibacter pomeroyi).